We begin with the raw amino-acid sequence, 174 residues long: Protein C2-DOMAIN ABA-RELATED 6 (174 aa).

In terms of domain architecture, C2 spans 1–115 (MEKTEEEVEM…HKLGLKELPH (115 aa)). Ca(2+)-binding residues include Arg30, Asp31, Asp36, Asp82, Lys83, Asp84, and Asp90.

Belongs to the plant CAR protein family. Binds to PYR/PYL/RCAR abscisic acid intracellular receptors in an ABA-independent manner, both at the plasma membrane and in the nucleus. Subunit of a complex made of CAR6, PHOT1 and RPT3/NPH3. Interacts directly with RPT3/NPH3.

It localises to the cell membrane. Its subcellular location is the nucleus. Its function is as follows. Stimulates the GTPase/ATPase activities of Obg-like ATPases. Mediates the transient calcium-dependent interaction of PYR/PYL/RCAR abscisic acid (ABA) receptors with the plasma membrane and thus regulates ABA sensitivity. Prevents hypocotyl bending as well as gravitropic response under blue light conditions. In Arabidopsis thaliana (Mouse-ear cress), this protein is Protein C2-DOMAIN ABA-RELATED 6.